Consider the following 391-residue polypeptide: Ferrochelatase (391 aa).

Fe cation is bound by residues His196 and Glu281.

It belongs to the ferrochelatase family.

It localises to the cytoplasm. It carries out the reaction heme b + 2 H(+) = protoporphyrin IX + Fe(2+). It participates in porphyrin-containing compound metabolism; protoheme biosynthesis; protoheme from protoporphyrin-IX: step 1/1. In terms of biological role, catalyzes the ferrous insertion into protoporphyrin IX. This is Ferrochelatase from Prochlorococcus marinus subsp. pastoris (strain CCMP1986 / NIES-2087 / MED4).